Reading from the N-terminus, the 188-residue chain is Elongation factor P (188 aa).

This sequence belongs to the elongation factor P family.

It localises to the cytoplasm. Its pathway is protein biosynthesis; polypeptide chain elongation. In terms of biological role, involved in peptide bond synthesis. Stimulates efficient translation and peptide-bond synthesis on native or reconstituted 70S ribosomes in vitro. Probably functions indirectly by altering the affinity of the ribosome for aminoacyl-tRNA, thus increasing their reactivity as acceptors for peptidyl transferase. The sequence is that of Elongation factor P from Exiguobacterium sp. (strain ATCC BAA-1283 / AT1b).